The chain runs to 214 residues: Pyridoxine/pyridoxamine 5'-phosphate oxidase (214 aa).

Substrate is bound by residues 8–11 (RTNY) and lysine 66. FMN is bound by residues 61 to 66 (RIVLIK), 76 to 77 (FT), arginine 82, lysine 83, and glutamine 105. 3 residues coordinate substrate: tyrosine 123, arginine 127, and serine 131. FMN-binding positions include 140-141 (QS) and tryptophan 184. Residue 190–192 (RLH) participates in substrate binding. Arginine 194 provides a ligand contact to FMN.

Belongs to the pyridoxamine 5'-phosphate oxidase family. As to quaternary structure, homodimer. The cofactor is FMN.

It catalyses the reaction pyridoxamine 5'-phosphate + O2 + H2O = pyridoxal 5'-phosphate + H2O2 + NH4(+). The catalysed reaction is pyridoxine 5'-phosphate + O2 = pyridoxal 5'-phosphate + H2O2. The protein operates within cofactor metabolism; pyridoxal 5'-phosphate salvage; pyridoxal 5'-phosphate from pyridoxamine 5'-phosphate: step 1/1. Its pathway is cofactor metabolism; pyridoxal 5'-phosphate salvage; pyridoxal 5'-phosphate from pyridoxine 5'-phosphate: step 1/1. Functionally, catalyzes the oxidation of either pyridoxine 5'-phosphate (PNP) or pyridoxamine 5'-phosphate (PMP) into pyridoxal 5'-phosphate (PLP). The protein is Pyridoxine/pyridoxamine 5'-phosphate oxidase of Burkholderia mallei (strain NCTC 10247).